The primary structure comprises 336 residues: UPF0104 membrane protein MJ1595 (336 aa).

9 consecutive transmembrane segments (helical) span residues S9 to L29, N40 to A60, I68 to I88, V127 to T147, Y154 to A174, W223 to L243, L245 to I265, V285 to L305, and L306 to I326.

It belongs to the UPF0104 family.

It localises to the cell membrane. This chain is UPF0104 membrane protein MJ1595, found in Methanocaldococcus jannaschii (strain ATCC 43067 / DSM 2661 / JAL-1 / JCM 10045 / NBRC 100440) (Methanococcus jannaschii).